The following is a 486-amino-acid chain: Mitogen-activated protein kinase 17 (486 aa).

The Protein kinase domain maps to Tyr16–Phe307. ATP is bound by residues Val22–Val30 and Lys45. Asp142 functions as the Proton acceptor in the catalytic mechanism. Phosphothreonine is present on Thr178. A TXY motif is present at residues Thr178–Tyr180. Tyr180 is subject to Phosphotyrosine. Position 183 is a phosphothreonine (Thr183). Positions Glu386 to Asp455 are disordered. Residues Ser422–Val433 show a composition bias toward low complexity. A compositionally biased stretch (polar residues) spans Pro440–Ser452.

It belongs to the protein kinase superfamily. CMGC Ser/Thr protein kinase family. MAP kinase subfamily. Post-translationally, dually phosphorylated on Thr-178 and Tyr-180, which activates the enzyme.

The enzyme catalyses L-seryl-[protein] + ATP = O-phospho-L-seryl-[protein] + ADP + H(+). It catalyses the reaction L-threonyl-[protein] + ATP = O-phospho-L-threonyl-[protein] + ADP + H(+). Its activity is regulated as follows. Activated by threonine and tyrosine phosphorylation. The polypeptide is Mitogen-activated protein kinase 17 (MPK17) (Arabidopsis thaliana (Mouse-ear cress)).